We begin with the raw amino-acid sequence, 240 residues long: Arylmalonate decarboxylase (240 aa).

It catalyses the reaction 2-aryl-2-methylmalonate + H(+) = 2-arylpropionate + CO2. The protein is Arylmalonate decarboxylase of Bordetella bronchiseptica (Alcaligenes bronchisepticus).